A 166-amino-acid chain; its full sequence is Outer membrane protein assembly factor BamE (166 aa).

An N-terminal signal peptide occupies residues 1 to 18; that stretch reads MKRTVFPLAVAAALTLTA. Residue Cys-19 is the site of N-palmitoyl cysteine attachment. A lipid anchor (S-diacylglycerol cysteine) is attached at Cys-19. Residues 143 to 166 are disordered; sequence LFSNDDSGEMPVKPESKPSDLLNE.

It belongs to the BamE family. In terms of assembly, part of the Bam complex.

The protein resides in the cell outer membrane. Part of the outer membrane protein assembly complex, which is involved in assembly and insertion of beta-barrel proteins into the outer membrane. The chain is Outer membrane protein assembly factor BamE from Methylomonas methanica (strain DSM 25384 / MC09).